Here is a 397-residue protein sequence, read N- to C-terminus: Phosphoglycerate kinase (397 aa).

Residues 21–23 (DFN), Arg37, 60–63 (HLGR), Arg120, and Arg153 each bind substrate. ATP is bound by residues Lys206, Gly296, Glu327, and 353–356 (GGDS).

It belongs to the phosphoglycerate kinase family. Monomer.

It localises to the cytoplasm. The catalysed reaction is (2R)-3-phosphoglycerate + ATP = (2R)-3-phospho-glyceroyl phosphate + ADP. The protein operates within carbohydrate degradation; glycolysis; pyruvate from D-glyceraldehyde 3-phosphate: step 2/5. This is Phosphoglycerate kinase from Rhodopirellula baltica (strain DSM 10527 / NCIMB 13988 / SH1).